The following is a 191-amino-acid chain: Protein Ves (191 aa).

It belongs to the Ves family.

The polypeptide is Protein Ves (Escherichia coli (strain SMS-3-5 / SECEC)).